Here is a 180-residue protein sequence, read N- to C-terminus: D-glycero-beta-D-manno-heptose-1,7-bisphosphate 7-phosphatase (180 aa).

Asp-14 functions as the Nucleophile in the catalytic mechanism. Residues Asp-14 and Asp-16 each coordinate Mg(2+). Residues Asp-14–Asp-16, Asn-22–Tyr-25, and Thr-56–Ser-59 each bind substrate. The Proton donor role is filled by Asp-16. Zn(2+)-binding residues include Cys-95, His-97, Cys-110, and His-112. Arg-113–Lys-114 serves as a coordination point for substrate. Asp-139 is a Mg(2+) binding site.

It belongs to the gmhB family. As to quaternary structure, monomer. Requires Mg(2+) as cofactor.

It localises to the cytoplasm. The enzyme catalyses D-glycero-beta-D-manno-heptose 1,7-bisphosphate + H2O = D-glycero-beta-D-manno-heptose 1-phosphate + phosphate. Its pathway is nucleotide-sugar biosynthesis; ADP-L-glycero-beta-D-manno-heptose biosynthesis; ADP-L-glycero-beta-D-manno-heptose from D-glycero-beta-D-manno-heptose 7-phosphate: step 2/4. It participates in bacterial outer membrane biogenesis; LPS core biosynthesis. In terms of biological role, converts the D-glycero-beta-D-manno-heptose 1,7-bisphosphate (beta-HBP) intermediate into D-glycero-beta-D-manno-heptose 1-phosphate by removing the phosphate group at the C-7 position. Also catalyzes the dephosphorylation of D-glycero-alpha-D-manno-heptose 1,7-bisphosphate in vitro. The polypeptide is D-glycero-beta-D-manno-heptose-1,7-bisphosphate 7-phosphatase (Rhodopseudomonas palustris (strain ATCC BAA-98 / CGA009)).